The chain runs to 451 residues: UPF0210 protein CLL_A1718 (451 aa).

Belongs to the UPF0210 family. As to quaternary structure, homodimer.

The protein is UPF0210 protein CLL_A1718 of Clostridium botulinum (strain Eklund 17B / Type B).